The sequence spans 839 residues: Taste receptor type 1 member 2 (839 aa).

The N-terminal stretch at 1 to 19 (MGPRAKTICSLFFLLWVLA) is a signal peptide. Residues 20–566 (EPAENSDFYL…VFLEWHEAPT (547 aa)) are Extracellular-facing. 9 N-linked (GlcNAc...) asparagine glycosylation sites follow: Asn84, Asn248, Asn292, Asn312, Asn368, Asn407, Asn428, Asn487, and Asn527. The chain crosses the membrane as a helical span at residues 567–587 (IAVALLAALGFLSTLAILVIF). At 588 to 602 (WRHFQTPIVRSAGGP) the chain is on the cytoplasmic side. A helical membrane pass occupies residues 603-623 (MCFLMLTLLLVAYMVVPVYVG). At 624–635 (PPKVSTCLCRQA) the chain is on the extracellular side. A helical transmembrane segment spans residues 636–656 (LFPLCFTICISCIAVRSFQIV). The Cytoplasmic portion of the chain corresponds to 657–681 (CAFKMASRFPRAYSYWVRYQGPYVS). A helical membrane pass occupies residues 682-702 (MAFITVLKMVIVVIGMLATGL). The Extracellular portion of the chain corresponds to 703–727 (SPTTRTDPDDPKITIVSCNPNYRNS). The chain crosses the membrane as a helical span at residues 728-748 (LLFNTSLDLLLSVVGFSFAYM). Residues 749–760 (GKELPTNYNEAK) are Cytoplasmic-facing. The chain crosses the membrane as a helical span at residues 761-781 (FITLSMTFYFTSSVSLCTFMS). The Extracellular segment spans residues 782–784 (AYS). The helical transmembrane segment at 785-805 (GVLVTIVDLLVTVLNLLAISL) threads the bilayer. Residues 806–839 (GYFGPKCYMILFYPERNTSAYFNSMIQGYTMRRD) are Cytoplasmic-facing.

It belongs to the G-protein coupled receptor 3 family. TAS1R subfamily. As to quaternary structure, forms heterodimers with TAS1R3.

It is found in the cell membrane. Functionally, putative taste receptor. TAS1R2/TAS1R3 recognizes diverse natural and synthetic sweeteners. The chain is Taste receptor type 1 member 2 (TAS1R2) from Pan troglodytes (Chimpanzee).